The following is a 396-amino-acid chain: Tryptophan synthase beta chain (396 aa).

The residue at position 86 (K86) is an N6-(pyridoxal phosphate)lysine.

This sequence belongs to the TrpB family. Tetramer of two alpha and two beta chains. Pyridoxal 5'-phosphate is required as a cofactor.

The catalysed reaction is (1S,2R)-1-C-(indol-3-yl)glycerol 3-phosphate + L-serine = D-glyceraldehyde 3-phosphate + L-tryptophan + H2O. It functions in the pathway amino-acid biosynthesis; L-tryptophan biosynthesis; L-tryptophan from chorismate: step 5/5. The beta subunit is responsible for the synthesis of L-tryptophan from indole and L-serine. The protein is Tryptophan synthase beta chain of Francisella tularensis subsp. novicida (strain U112).